The chain runs to 817 residues: MALTSQSLFFSPLAAGPSRRVRGRGRSTSVSAAASASSHNSQPHGHPQQPLAVASSSSKSESKGSKTFALASAITAAASGAFLLASSGGGFGGGAGGPLGGGGGGWGAGGGGGGGGGGGGGGFWSRIFSGGAAHADEKSSGDWDPHGLPANINVPMTKLSGLKRYKISELKFFDRAAGGGGAFTGPEDSFFEMVTLQPGGVYTKSQLLKELETLVSCGMFERVDLEGKAKPDGTLGLTVSFVESVWSAAKQFKCINVGLMSQSGQVDFDQDMTEREKMDYLRKQERDYQQRVRGAKPCILPDNVRGEVLGMMKKQEKVSARLLQRIRDHVQKWYHNEGFVCAQVVNFGNLNTSEVVCEVVEGDITKVEYQFQDKLGNFVEGNTQIPIIDRELPQQLRPGHIFNIGAGKQALKNINSLALFSNIEVNPRPDETKEGGIVVEIKLKELEPKSAEVSTEWSIVPGREGRPTLASIQPGGTVSFEHRNIYGLNRSIVGSVTSSNLLNPQDDLSFKLEYVHPYLDGVDDRNKNRTFKTSCFNTRKLSPVFVAGPNMDEAPPVWVDRVGFKANITESFTRQSKFTYGLVVEEITTRDETNSICTHGSRAMPSGGLSMDGPPTTLSGTGIDRMAFLQANITRDNTEFVNGAVIGDRCIFQLDQGLGIGSKNPFFNRHQLTLTKFVNLNKQEKGAGKPLPAVLVLHGHYAGCVGDLPSYDAFTLGGPYSVRGYGMGELGASRNVLEVASELRIPVRNTYVYGFVEHGTDLGSSKDVKGNPTEFFRRVGHGSSYGLGVKLGLVRGEYIVDHNAGTGTVFFRFGERF.

The N-terminal 31 residues, 1–31, are a transit peptide targeting the chloroplast; the sequence is MALTSQSLFFSPLAAGPSRRVRGRGRSTSVS. Residues 14 to 59 form a disordered region; the sequence is AAGPSRRVRGRGRSTSVSAAASASSHNSQPHGHPQQPLAVASSSSK. Residues 26–38 show a composition bias toward low complexity; that stretch reads RSTSVSAAASASS. The N-terminal 104 residues, 32-135, are a transit peptide targeting the chloroplast; outer membrane; it reads AAASASSHNS…RIFSGGAAHA (104 aa). Over 136 to 147 the chain is Chloroplast intermembrane; it reads DEKSSGDWDPHG. The beta stranded transmembrane segment at 148-156 threads the bilayer; that stretch reads LPANINVPM. Residues 157 to 164 lie on the Cytoplasmic side of the membrane; the sequence is TKLSGLKR. A beta stranded membrane pass occupies residues 165-173; it reads YKISELKFF. Residues 174–232 are Chloroplast intermembrane-facing; it reads DRAAGGGGAFTGPEDSFFEMVTLQPGGVYTKSQLLKELETLVSCGMFERVDLEGKAKPD. The chain crosses the membrane as a beta stranded span at residues 233-241; sequence GTLGLTVSF. The Cytoplasmic segment spans residues 242–254; that stretch reads VESVWSAAKQFKC. The beta stranded transmembrane segment at 255–261 threads the bilayer; sequence INVGLMS. The Chloroplast intermembrane portion of the chain corresponds to 262-364; that stretch reads QSGQVDFDQD…VVCEVVEGDI (103 aa). The chain crosses the membrane as a beta stranded span at residues 365 to 372; it reads TKVEYQFQ. At 373 to 417 the chain is on the cytoplasmic side; sequence DKLGNFVEGNTQIPIIDRELPQQLRPGHIFNIGAGKQALKNINSL. Residues 418 to 425 traverse the membrane as a beta stranded segment; that stretch reads ALFSNIEV. Topologically, residues 426–434 are chloroplast intermembrane; the sequence is NPRPDETKE. A beta stranded membrane pass occupies residues 435-443; it reads GGIVVEIKL. Residues 444 to 449 are Cytoplasmic-facing; the sequence is KELEPK. A beta stranded transmembrane segment spans residues 450–459; it reads SAEVSTEWSI. Residues 460–471 lie on the Chloroplast intermembrane side of the membrane; it reads VPGREGRPTLAS. A beta stranded membrane pass occupies residues 472 to 480; that stretch reads IQPGGTVSF. The Cytoplasmic portion of the chain corresponds to 481–507; it reads EHRNIYGLNRSIVGSVTSSNLLNPQDD. Residues 508-516 traverse the membrane as a beta stranded segment; that stretch reads LSFKLEYVH. Residues 517-561 lie on the Chloroplast intermembrane side of the membrane; it reads PYLDGVDDRNKNRTFKTSCFNTRKLSPVFVAGPNMDEAPPVWVDR. Residues 562–569 form a beta stranded membrane-spanning segment; the sequence is VGFKANIT. The Cytoplasmic portion of the chain corresponds to 570-577; sequence ESFTRQSK. A beta stranded transmembrane segment spans residues 578–585; sequence FTYGLVVE. Residues 586–692 are Chloroplast intermembrane-facing; that stretch reads EITTRDETNS…QEKGAGKPLP (107 aa). A beta stranded transmembrane segment spans residues 693–701; it reads AVLVLHGHY. Topologically, residues 702-713 are cytoplasmic; it reads AGCVGDLPSYDA. The chain crosses the membrane as a beta stranded span at residues 714–722; sequence FTLGGPYSV. Residues 723–784 lie on the Chloroplast intermembrane side of the membrane; that stretch reads RGYGMGELGA…FFRRVGHGSS (62 aa). Residues 785–791 form a beta stranded membrane-spanning segment; sequence YGLGVKL. The Cytoplasmic portion of the chain corresponds to 792 to 805; that stretch reads GLVRGEYIVDHNAG. The beta stranded transmembrane segment at 806–813 threads the bilayer; sequence TGTVFFRF. Residues 814 to 817 are Chloroplast intermembrane-facing; sequence GERF.

This sequence belongs to the TOC75 family. As to quaternary structure, part of the TOC core complex that includes a protein for the specific recognition of transit peptides surrounded by a ring composed of four proteins forming translocation channels, and four to five GTP-binding proteins providing energy. This core complex can interact with components of the TIC complex to form a larger import complex. Chloroplastic protein precursors also interact with these complexes.

It localises to the plastid. The protein resides in the chloroplast outer membrane. Its function is as follows. Mediates the insertion of proteins targeted to the outer membrane of chloroplasts. Required for the import of protein precursors into chloroplasts. Forms the voltage-dependent preprotein translocation channels (hydrophilic beta barrel) of the TOC complex in the chloroplastic outer membrane. This Oryza sativa subsp. japonica (Rice) protein is Protein TOC75, chloroplastic (TOC75).